The following is a 402-amino-acid chain: Multidrug resistance protein MdtH (402 aa).

At 1–12 (MSRVSQARNLGK) the chain is on the cytoplasmic side. The helical transmembrane segment at 13–33 (YFLLIDNMLVVLGFFVVFPLI) threads the bilayer. Topologically, residues 34–98 (SIRFIDQMGW…GFATMGIAHE (65 aa)) are periplasmic. Residues 99 to 116 (PWLLWFSCFLSGLGGTLF) traverse the membrane as a helical segment. The Cytoplasmic portion of the chain corresponds to 117–138 (DPPRSALVVKLIRPEQRGRFFS). A helical transmembrane segment spans residues 139–159 (LLMMQDSAGAVIGALLGSWLL). Residues 160 to 164 (QYDFR) are Periplasmic-facing. A helical membrane pass occupies residues 165 to 185 (LVCATGAILFILCALFNAWLL). At 186-213 (PAWKLSTVRTPVREGMRRVMSDKRFVTY) the chain is on the cytoplasmic side. The chain crosses the membrane as a helical span at residues 214–234 (VLTLAGYYMLAVQVMLMLPIM). Over 235 to 243 (VNDIAGSPA) the chain is Periplasmic. Residues 244–264 (AVKWMYAIEACLSLTLLYPIA) traverse the membrane as a helical segment. Topologically, residues 265 to 276 (RWSEKRFRLEHR) are cytoplasmic. The chain crosses the membrane as a helical span at residues 277-297 (LMAGLLVMSLSMIPIGMVGNL). The Periplasmic portion of the chain corresponds to 298 to 299 (QQ). Residues 300-320 (LFTLICAFYIGSVIAEPARET) traverse the membrane as a helical segment. At 321–339 (LSASLADARARGSYMGFSR) the chain is on the cytoplasmic side. Residues 340 to 360 (LGLAIGGAIGYIGGGWLFDMG) form a helical membrane-spanning segment. The Periplasmic segment spans residues 361–367 (KALTQPE). The chain crosses the membrane as a helical span at residues 368 to 388 (LPWMMLGIIGFITFLALGWQF). The Cytoplasmic segment spans residues 389-402 (SHKRTPRRMLEPGA).

Belongs to the major facilitator superfamily. DHA1 family. MdtH (TC 2.A.1.2.21) subfamily.

It is found in the cell inner membrane. The chain is Multidrug resistance protein MdtH from Salmonella paratyphi C (strain RKS4594).